The sequence spans 113 residues: Hydrogenase maturation factor HypA (113 aa).

His2 serves as a coordination point for Ni(2+). The Zn(2+) site is built by Cys73, Cys76, Cys89, and Cys92.

Belongs to the HypA/HybF family.

Its function is as follows. Involved in the maturation of [NiFe] hydrogenases. Required for nickel insertion into the metal center of the hydrogenase. The polypeptide is Hydrogenase maturation factor HypA (Legionella pneumophila (strain Paris)).